The sequence spans 421 residues: D-amino acid dehydrogenase (421 aa).

3-17 (VIVLGSGVIGVASAY) serves as a coordination point for FAD.

The protein belongs to the DadA oxidoreductase family. The cofactor is FAD.

The catalysed reaction is a D-alpha-amino acid + A + H2O = a 2-oxocarboxylate + AH2 + NH4(+). It functions in the pathway amino-acid degradation; D-alanine degradation; NH(3) and pyruvate from D-alanine: step 1/1. Functionally, oxidative deamination of D-amino acids. The chain is D-amino acid dehydrogenase from Acinetobacter baumannii (strain ATCC 17978 / DSM 105126 / CIP 53.77 / LMG 1025 / NCDC KC755 / 5377).